The chain runs to 86 residues: Small ribosomal subunit protein uS17 (86 aa).

The protein belongs to the universal ribosomal protein uS17 family. In terms of assembly, part of the 30S ribosomal subunit.

Its function is as follows. One of the primary rRNA binding proteins, it binds specifically to the 5'-end of 16S ribosomal RNA. The protein is Small ribosomal subunit protein uS17 of Bifidobacterium longum (strain DJO10A).